Reading from the N-terminus, the 161-residue chain is Protein-export protein SecB (161 aa).

Belongs to the SecB family. Homotetramer, a dimer of dimers. One homotetramer interacts with 1 SecA dimer.

The protein localises to the cytoplasm. Its function is as follows. One of the proteins required for the normal export of preproteins out of the cell cytoplasm. It is a molecular chaperone that binds to a subset of precursor proteins, maintaining them in a translocation-competent state. It also specifically binds to its receptor SecA. This chain is Protein-export protein SecB, found in Coxiella burnetii (strain Dugway 5J108-111).